The chain runs to 437 residues: Trigger factor (437 aa).

The region spanning 161–246 (GDRVNIDFKG…VNKVEGKALP (86 aa)) is the PPIase FKBP-type domain.

Belongs to the FKBP-type PPIase family. Tig subfamily.

It is found in the cytoplasm. It carries out the reaction [protein]-peptidylproline (omega=180) = [protein]-peptidylproline (omega=0). Involved in protein export. Acts as a chaperone by maintaining the newly synthesized protein in an open conformation. Functions as a peptidyl-prolyl cis-trans isomerase. This Alcanivorax borkumensis (strain ATCC 700651 / DSM 11573 / NCIMB 13689 / SK2) protein is Trigger factor.